We begin with the raw amino-acid sequence, 454 residues long: Glutamyl-tRNA reductase (454 aa).

Substrate-binding positions include Thr49–Arg52, Ser109, Glu114–Gln116, and Gln120. Cys50 (nucleophile) is an active-site residue. Position 189 to 194 (Gly189 to Gly194) interacts with NADP(+).

It belongs to the glutamyl-tRNA reductase family. As to quaternary structure, homodimer.

It catalyses the reaction (S)-4-amino-5-oxopentanoate + tRNA(Glu) + NADP(+) = L-glutamyl-tRNA(Glu) + NADPH + H(+). Its pathway is porphyrin-containing compound metabolism; protoporphyrin-IX biosynthesis; 5-aminolevulinate from L-glutamyl-tRNA(Glu): step 1/2. Functionally, catalyzes the NADPH-dependent reduction of glutamyl-tRNA(Glu) to glutamate 1-semialdehyde (GSA). The chain is Glutamyl-tRNA reductase from Geobacillus kaustophilus (strain HTA426).